The sequence spans 111 residues: SPbeta prophage-derived uncharacterized protein YopW (111 aa).

The sequence is that of SPbeta prophage-derived uncharacterized protein YopW (yopW) from Bacillus subtilis (strain 168).